A 145-amino-acid polypeptide reads, in one-letter code: Small ribosomal subunit protein uS19 (145 aa).

Ala-2 carries the N-acetylalanine modification. A Glycyl lysine isopeptide (Lys-Gly) (interchain with G-Cter in SUMO2) cross-link involves residue Lys-108.

Belongs to the universal ribosomal protein uS19 family. As to quaternary structure, component of the small ribosomal subunit.

The protein localises to the cytoplasm. Functionally, component of the small ribosomal subunit. The ribosome is a large ribonucleoprotein complex responsible for the synthesis of proteins in the cell. The chain is Small ribosomal subunit protein uS19 (RPS15) from Mesocricetus auratus (Golden hamster).